The chain runs to 942 residues: Replicase polyprotein P2AB (942 aa).

2 helical membrane-spanning segments follow: residues lysine 10–alanine 30 and threonine 41–cysteine 61. One can recognise a Peptidase S39 domain in the interval valine 129–aspartate 326. Residues histidine 176, aspartate 209, and serine 276 each act as for protease activity in the active site. Threonine 339 bears the Phosphothreonine; by host mark. A Phosphoserine; by host modification is found at serine 390. Positions histidine 691 to tyrosine 805 constitute a RdRp catalytic domain. Residues glycine 888 to glutamate 917 form a disordered region. The segment covering asparagine 897–serine 908 has biased composition (polar residues).

The polyprotein is proteolytically cleaved into several chains by the viral protease.

It is found in the host membrane. It catalyses the reaction RNA(n) + a ribonucleoside 5'-triphosphate = RNA(n+1) + diphosphate. Responsible for cleavage of polyprotein P2A and replicase polyprotein P2AB. Functionally, covalently attached to the 5' extremity of the genomic and subgenomic RNAs. It may serve as a primer for the replicase. In terms of biological role, replicates the viral genome. The chain is Replicase polyprotein P2AB from Dactylis glomerata (Orchard grass).